The sequence spans 129 residues: Small ribosomal subunit protein uS11 (129 aa).

The protein belongs to the universal ribosomal protein uS11 family. Part of the 30S ribosomal subunit. Interacts with proteins S7 and S18. Binds to IF-3.

Located on the platform of the 30S subunit, it bridges several disparate RNA helices of the 16S rRNA. Forms part of the Shine-Dalgarno cleft in the 70S ribosome. This Limosilactobacillus fermentum (strain NBRC 3956 / LMG 18251) (Lactobacillus fermentum) protein is Small ribosomal subunit protein uS11.